We begin with the raw amino-acid sequence, 231 residues long: 2,3-bisphosphoglycerate-dependent phosphoglycerate mutase (231 aa).

Residues 10–17 (RHGQSEWN), 23–24 (TG), Arg62, 89–92 (ERHY), Lys100, 116–117 (RR), and 185–186 (GN) each bind substrate. His11 acts as the Tele-phosphohistidine intermediate in catalysis. Glu89 (proton donor/acceptor) is an active-site residue.

Belongs to the phosphoglycerate mutase family. BPG-dependent PGAM subfamily. As to quaternary structure, homodimer.

The enzyme catalyses (2R)-2-phosphoglycerate = (2R)-3-phosphoglycerate. Its pathway is carbohydrate degradation; glycolysis; pyruvate from D-glyceraldehyde 3-phosphate: step 3/5. Catalyzes the interconversion of 2-phosphoglycerate and 3-phosphoglycerate. In Buchnera aphidicola subsp. Acyrthosiphon pisum (strain APS) (Acyrthosiphon pisum symbiotic bacterium), this protein is 2,3-bisphosphoglycerate-dependent phosphoglycerate mutase.